Reading from the N-terminus, the 365-residue chain is Chorismate synthase (365 aa).

Position 48 (R48) interacts with NADP(+). Residues R125–S127, G286, K301–S305, and R328 each bind FMN.

Belongs to the chorismate synthase family. FMNH2 serves as cofactor.

It carries out the reaction 5-O-(1-carboxyvinyl)-3-phosphoshikimate = chorismate + phosphate. The protein operates within metabolic intermediate biosynthesis; chorismate biosynthesis; chorismate from D-erythrose 4-phosphate and phosphoenolpyruvate: step 7/7. Catalyzes the anti-1,4-elimination of the C-3 phosphate and the C-6 proR hydrogen from 5-enolpyruvylshikimate-3-phosphate (EPSP) to yield chorismate, which is the branch point compound that serves as the starting substrate for the three terminal pathways of aromatic amino acid biosynthesis. This reaction introduces a second double bond into the aromatic ring system. The sequence is that of Chorismate synthase from Methanosphaera stadtmanae (strain ATCC 43021 / DSM 3091 / JCM 11832 / MCB-3).